The following is a 494-amino-acid chain: Probable cobyric acid synthase (494 aa).

Residues 249–447 (SVRIAVIRLP…LHGIFFNRRF (199 aa)) enclose the GATase cobBQ-type domain. The active-site Nucleophile is cysteine 331. Histidine 439 is an active-site residue.

This sequence belongs to the CobB/CobQ family. CobQ subfamily.

The protein operates within cofactor biosynthesis; adenosylcobalamin biosynthesis. In terms of biological role, catalyzes amidations at positions B, D, E, and G on adenosylcobyrinic A,C-diamide. NH(2) groups are provided by glutamine, and one molecule of ATP is hydrogenolyzed for each amidation. This is Probable cobyric acid synthase from Methanopyrus kandleri (strain AV19 / DSM 6324 / JCM 9639 / NBRC 100938).